A 95-amino-acid chain; its full sequence is Small ribosomal subunit protein uS19 (95 aa).

It belongs to the universal ribosomal protein uS19 family.

Its function is as follows. Protein S19 forms a complex with S13 that binds strongly to the 16S ribosomal RNA. This Lactobacillus gasseri (strain ATCC 33323 / DSM 20243 / BCRC 14619 / CIP 102991 / JCM 1131 / KCTC 3163 / NCIMB 11718 / NCTC 13722 / AM63) protein is Small ribosomal subunit protein uS19.